Consider the following 509-residue polypeptide: Zinc finger protein CKR1 (509 aa).

The region spanning 1–61 (MEPYVLLDPR…GSEEPQTHPP (61 aa)) is the KRAB domain. Basic and acidic residues-rich tracts occupy residues 41–50 (EDAVGLKEDA) and 98–112 (PKRD…RDRP). Residues 41-114 (EDAVGLKEDA…PSRVRDRPFG (74 aa)) form a disordered region. 11 C2H2-type zinc fingers span residues 113–135 (FGCP…RRVH), 141–163 (YSCP…RRTH), 169–191 (HKCQ…SRGH), 197–219 (HRCG…RRVH), 225–247 (YECP…RRSH), 279–303 (QRCA…ERSH), 303–325 (HRCG…RRVH), 331–353 (FPCG…GKTH), 359–383 (YKCG…GHAA), 387–409 (FTCG…RRVH), and 415–437 (YECP…RRSH). The segment at 428–479 (SHLTKHRRSHGPKAPLLPVQGRGEAGEPLRASPLSSGAEQRDGRRAQRGGVE) is disordered.

Belongs to the krueppel C2H2-type zinc-finger protein family.

The protein localises to the nucleus. The protein is Zinc finger protein CKR1 of Gallus gallus (Chicken).